A 622-amino-acid chain; its full sequence is UvrABC system protein C (622 aa).

The GIY-YIG domain occupies 12 to 91; it reads SSPGVYIMKD…IKKYRPKYNF (80 aa). The 36-residue stretch at 201-236 folds into the UVR domain; that stretch reads REILKIFRERMSAAAAAEKYEKAARFRDLIRSIEVT.

Belongs to the UvrC family. Interacts with UvrB in an incision complex.

The protein localises to the cytoplasm. In terms of biological role, the UvrABC repair system catalyzes the recognition and processing of DNA lesions. UvrC both incises the 5' and 3' sides of the lesion. The N-terminal half is responsible for the 3' incision and the C-terminal half is responsible for the 5' incision. The chain is UvrABC system protein C from Geotalea daltonii (strain DSM 22248 / JCM 15807 / FRC-32) (Geobacter daltonii).